We begin with the raw amino-acid sequence, 881 residues long: Leucine--tRNA ligase (881 aa).

The 'HIGH' region motif lies at 48 to 58; the sequence is PYPSGKLHMGH. Residues 638 to 642 carry the 'KMSKS' region motif; sequence KMSKS. Residue Lys641 participates in ATP binding.

The protein belongs to the class-I aminoacyl-tRNA synthetase family.

It localises to the cytoplasm. It carries out the reaction tRNA(Leu) + L-leucine + ATP = L-leucyl-tRNA(Leu) + AMP + diphosphate. This chain is Leucine--tRNA ligase, found in Herminiimonas arsenicoxydans.